The primary structure comprises 212 residues: Probable octanoyltransferase (212 aa).

The region spanning 28-199 is the BPL/LPL catalytic domain; that stretch reads GVSEEMILVT…NLETLLQRQE (172 aa). Residues 66-73, 130-132, and 143-145 each bind substrate; these read RGGDATYH, SVG, and GVA. Cys-161 serves as the catalytic Acyl-thioester intermediate.

The protein belongs to the LipB family.

Its subcellular location is the cytoplasm. The catalysed reaction is octanoyl-[ACP] + L-lysyl-[protein] = N(6)-octanoyl-L-lysyl-[protein] + holo-[ACP] + H(+). It functions in the pathway protein modification; protein lipoylation via endogenous pathway; protein N(6)-(lipoyl)lysine from octanoyl-[acyl-carrier-protein]: step 1/2. In terms of biological role, catalyzes the transfer of endogenously produced octanoic acid from octanoyl-acyl-carrier-protein onto the lipoyl domains of lipoate-dependent enzymes. Lipoyl-ACP can also act as a substrate although octanoyl-ACP is likely to be the physiological substrate. This Pyrobaculum arsenaticum (strain DSM 13514 / JCM 11321 / PZ6) protein is Probable octanoyltransferase.